Consider the following 240-residue polypeptide: Thiopurine S-methyltransferase (240 aa).

24-35 (WQDKWVTRHIAF) is a binding site for S-adenosyl-L-methionine. Phe35 provides a ligand contact to substrate. Lys53 bears the N6-acetyllysine mark. S-adenosyl-L-methionine-binding positions include Leu64, Glu85, 129–130 (SI), and Arg147.

Belongs to the class I-like SAM-binding methyltransferase superfamily. TPMT family. Monomer.

The protein resides in the cytoplasm. The enzyme catalyses S-adenosyl-L-methionine + a thiopurine = S-adenosyl-L-homocysteine + a thiopurine S-methylether.. The catalysed reaction is mercaptopurine + S-adenosyl-L-methionine = 6-methylthiopurine + S-adenosyl-L-homocysteine + H(+). Its function is as follows. Catalyzes the S-methylation of thiopurine drugs such as 6-mercaptopurine (also called mercaptopurine, 6-MP or its brand name Purinethol) using S-adenosyl-L-methionine as the methyl donor. TPMT activity modulates the cytotoxic effects of thiopurine prodrugs. A natural substrate for this enzyme has yet to be identified. The chain is Thiopurine S-methyltransferase (Tpmt) from Rattus norvegicus (Rat).